The chain runs to 291 residues: Putative butyrophilin-like protein 10 pseudogene (291 aa).

An N-terminal signal peptide occupies residues 1–26; the sequence is MAVTCDPEAFLSICFVTLVFLQLPLA. The region spanning 27 to 146 is the Ig-like V-type domain; it reads SIWKADFDVT…GEATVQVQVA (120 aa). Residues 27–254 are Extracellular-facing; sequence SIWKADFDVT…RSSQFTAWKA (228 aa). A disulfide bond links cysteine 54 and cysteine 128. Asparagine 59 carries N-linked (GlcNAc...) asparagine glycosylation. The chain crosses the membrane as a helical span at residues 255 to 275; sequence ALPLILVAMGLVIAGGICIFW. Residues 276-291 are Cytoplasmic-facing; it reads KRQREKNKASLEEERE.

This sequence belongs to the immunoglobulin superfamily. BTN/MOG family.

The protein localises to the membrane. The polypeptide is Putative butyrophilin-like protein 10 pseudogene (Homo sapiens (Human)).